We begin with the raw amino-acid sequence, 129 residues long: Lysozyme C (129 aa).

One can recognise a C-type lysozyme domain in the interval 1 to 129; sequence KVYGRCELAA…VNAWTRGCRL (129 aa). 4 cysteine pairs are disulfide-bonded: Cys-6–Cys-127, Cys-30–Cys-115, Cys-64–Cys-80, and Cys-76–Cys-94. Residues Glu-35 and Asp-52 contribute to the active site.

The protein belongs to the glycosyl hydrolase 22 family. In terms of assembly, monomer.

It is found in the secreted. It catalyses the reaction Hydrolysis of (1-&gt;4)-beta-linkages between N-acetylmuramic acid and N-acetyl-D-glucosamine residues in a peptidoglycan and between N-acetyl-D-glucosamine residues in chitodextrins.. Its function is as follows. Lysozymes have primarily a bacteriolytic function; those in tissues and body fluids are associated with the monocyte-macrophage system and enhance the activity of immunoagents. This chain is Lysozyme C (LYZ), found in Chrysolophus amherstiae (Lady Amherst's pheasant).